A 91-amino-acid polypeptide reads, in one-letter code: Probable Fe(2+)-trafficking protein (91 aa).

It belongs to the Fe(2+)-trafficking protein family.

Its function is as follows. Could be a mediator in iron transactions between iron acquisition and iron-requiring processes, such as synthesis and/or repair of Fe-S clusters in biosynthetic enzymes. The protein is Probable Fe(2+)-trafficking protein of Burkholderia multivorans (strain ATCC 17616 / 249).